Reading from the N-terminus, the 440-residue chain is Tryptophan synthase beta chain (440 aa).

Lys110 carries the post-translational modification N6-(pyridoxal phosphate)lysine.

This sequence belongs to the TrpB family. Tetramer of two alpha and two beta chains. It depends on pyridoxal 5'-phosphate as a cofactor.

The catalysed reaction is (1S,2R)-1-C-(indol-3-yl)glycerol 3-phosphate + L-serine = D-glyceraldehyde 3-phosphate + L-tryptophan + H2O. The protein operates within amino-acid biosynthesis; L-tryptophan biosynthesis; L-tryptophan from chorismate: step 5/5. The beta subunit is responsible for the synthesis of L-tryptophan from indole and L-serine. The chain is Tryptophan synthase beta chain from Thermococcus gammatolerans (strain DSM 15229 / JCM 11827 / EJ3).